Consider the following 192-residue polypeptide: Group XIIA secretory phospholipase A2 (192 aa).

The signal sequence occupies residues methionine 1–glycine 25. Residues glycine 91, proline 93, and phenylalanine 95 each contribute to the Ca(2+) site. Histidine 113 is an active-site residue. Residue aspartate 114 participates in Ca(2+) binding. Residue aspartate 128 is part of the active site.

Belongs to the phospholipase A2 family. It depends on Ca(2+) as a cofactor.

The protein resides in the secreted. It is found in the cytoplasm. The enzyme catalyses a 1,2-diacyl-sn-glycero-3-phosphocholine + H2O = a 1-acyl-sn-glycero-3-phosphocholine + a fatty acid + H(+). Functionally, PA2 catalyzes the calcium-dependent hydrolysis of the 2-acyl groups in 3-sn-phosphoglycerides. Does not exhibit detectable activity toward sn-2-arachidonoyl- or linoleoyl-phosphatidylcholine or -phosphatidylethanolamine. The chain is Group XIIA secretory phospholipase A2 (Pla2g12a) from Mus musculus (Mouse).